Reading from the N-terminus, the 143-residue chain is Large ribosomal subunit protein uL13 (143 aa).

The protein belongs to the universal ribosomal protein uL13 family. Part of the 50S ribosomal subunit.

Its function is as follows. This protein is one of the early assembly proteins of the 50S ribosomal subunit, although it is not seen to bind rRNA by itself. It is important during the early stages of 50S assembly. The protein is Large ribosomal subunit protein uL13 of Methanosarcina acetivorans (strain ATCC 35395 / DSM 2834 / JCM 12185 / C2A).